We begin with the raw amino-acid sequence, 226 residues long: Cytidylate kinase (226 aa).

Residue 10-18 (GPASSGKST) coordinates ATP.

It belongs to the cytidylate kinase family. Type 1 subfamily.

The protein resides in the cytoplasm. It carries out the reaction CMP + ATP = CDP + ADP. It catalyses the reaction dCMP + ATP = dCDP + ADP. This is Cytidylate kinase from Streptococcus uberis (strain ATCC BAA-854 / 0140J).